The primary structure comprises 517 residues: Ovoinhibitor (517 aa).

Kazal-like domains are found at residues 67–132 (FGIE…ECRP), 133–197 (KHVT…ECKL), 198–263 (EIGS…KCRQ), 264–329 (EIPE…RCKE), 330–394 (RSTP…RCRE), 395–460 (EVPE…RCEE), and 461–517 (DITK…MAAC). Residue asparagine 72 is glycosylated (N-linked (GlcNAc...) asparagine). Intrachain disulfides connect cysteine 73–cysteine 112, cysteine 90–cysteine 109, cysteine 98–cysteine 130, cysteine 139–cysteine 177, cysteine 155–cysteine 174, cysteine 163–cysteine 195, cysteine 204–cysteine 243, cysteine 221–cysteine 240, cysteine 229–cysteine 261, cysteine 270–cysteine 309, cysteine 287–cysteine 306, cysteine 295–cysteine 327, cysteine 336–cysteine 374, cysteine 352–cysteine 371, cysteine 360–cysteine 392, cysteine 401–cysteine 440, cysteine 418–cysteine 437, cysteine 426–cysteine 458, cysteine 467–cysteine 499, cysteine 477–cysteine 496, and cysteine 485–cysteine 517. Asparagine 186 is a glycosylation site (N-linked (GlcNAc...) asparagine). Asparagine 506 carries N-linked (GlcNAc...) asparagine glycosylation.

In terms of processing, glycosylated. As to expression, expressed in oviduct (at protein level). Expressed in egg white (at protein level). Expressed in egg yolk plasma of non-fertilized eggs (at protein level). Expressed in the magnum of the oviduct (at protein level). Expressed in oviduct. Expressed in liver. Expressed in the cortico-medullary border region of the bursa of Fabricius by the bursal secretory dendritic-like cells. Highly expressed in the magnum of the oviduct, and at a lower level in uterus. Weakly expressed in white isthmus and very weakly in infundibulum. Not expressed in duodenum and kidney.

It is found in the secreted. Its function is as follows. Serine protease inhibitor involved in antimicrobial egg defense preventing contamination of table eggs (non-fertilized eggs) and protecting the chick embryo (fertilized eggs). Inhibits trypsin, chymotrypsin, elastase, subtilisin and a proteinase of fungus Aspergillus oryzae. Inhibits calcium-activated potassium channels KCNMA1 (bovine) and slo (Drosophila). Has antibacterial activity against B.thuringiensis LMSA 3.06.004, but not against S.aureus CIP 103 811, P.aeruginosa PAO1, B.cereus ATCC6464 or B.subtilis ATCC 6633. In Gallus gallus (Chicken), this protein is Ovoinhibitor.